The sequence spans 129 residues: Allergen Bra j 1-E (129 aa).

A disordered region spans residues 28 to 47 (KQAMQSGSGPQPQGPQQRPP). A compositionally biased stretch (low complexity) spans 32-47 (QSGSGPQPQGPQQRPP).

The protein belongs to the 2S seed storage albumins family. In terms of assembly, the mature protein consists of a small and a large chain linked by two disulfide bonds.

In terms of biological role, this is a 2S seed storage protein. The sequence is that of Allergen Bra j 1-E from Brassica juncea (Indian mustard).